The sequence spans 176 residues: uncharacterized protein (176 aa).

This is an uncharacterized protein from Treponema pallidum (strain Nichols).